The following is a 231-amino-acid chain: UPF0173 metal-dependent hydrolase AF_1265 (231 aa).

It belongs to the UPF0173 family.

The chain is UPF0173 metal-dependent hydrolase AF_1265 from Archaeoglobus fulgidus (strain ATCC 49558 / DSM 4304 / JCM 9628 / NBRC 100126 / VC-16).